A 160-amino-acid polypeptide reads, in one-letter code: Transcription elongation factor GreA (160 aa).

Residues 1–72 (MAEKTYPMTQ…QIQILETKIR (72 aa)) are a coiled coil.

The protein belongs to the GreA/GreB family.

Necessary for efficient RNA polymerase transcription elongation past template-encoded arresting sites. The arresting sites in DNA have the property of trapping a certain fraction of elongating RNA polymerases that pass through, resulting in locked ternary complexes. Cleavage of the nascent transcript by cleavage factors such as GreA or GreB allows the resumption of elongation from the new 3'terminus. GreA releases sequences of 2 to 3 nucleotides. This chain is Transcription elongation factor GreA, found in Streptococcus agalactiae serotype Ia (strain ATCC 27591 / A909 / CDC SS700).